The following is a 362-amino-acid chain: Chorismate synthase (362 aa).

R47 is an NADP(+) binding site. FMN is bound by residues 124–126 (RSS), G286, 301–305 (KPTAT), and R327.

Belongs to the chorismate synthase family. In terms of assembly, homotetramer. It depends on FMNH2 as a cofactor.

The enzyme catalyses 5-O-(1-carboxyvinyl)-3-phosphoshikimate = chorismate + phosphate. It participates in metabolic intermediate biosynthesis; chorismate biosynthesis; chorismate from D-erythrose 4-phosphate and phosphoenolpyruvate: step 7/7. Its function is as follows. Catalyzes the anti-1,4-elimination of the C-3 phosphate and the C-6 proR hydrogen from 5-enolpyruvylshikimate-3-phosphate (EPSP) to yield chorismate, which is the branch point compound that serves as the starting substrate for the three terminal pathways of aromatic amino acid biosynthesis. This reaction introduces a second double bond into the aromatic ring system. This is Chorismate synthase from Synechococcus elongatus (strain ATCC 33912 / PCC 7942 / FACHB-805) (Anacystis nidulans R2).